Here is a 67-residue protein sequence, read N- to C-terminus: uncharacterized protein (67 aa).

This is an uncharacterized protein from Acidianus filamentous virus 2 (isolate Italy/Pozzuoli) (AFV-2).